A 423-amino-acid polypeptide reads, in one-letter code: Large ribosomal subunit protein mL37 (423 aa).

Residues 1–29 (MALASGPALRALAGSGRLGLGGYGTPKRG) constitute a mitochondrion transit peptide.

The protein belongs to the mitochondrion-specific ribosomal protein mL37 family. As to quaternary structure, component of the mitochondrial ribosome large subunit (39S) which comprises a 16S rRNA and about 50 distinct proteins.

The protein resides in the mitochondrion. In Mus musculus (Mouse), this protein is Large ribosomal subunit protein mL37 (Mrpl37).